Here is a 63-residue protein sequence, read N- to C-terminus: Laccase-C1 (63 aa).

It belongs to the multicopper oxidase family. Monomer. The cofactor is Cu cation. Glycosylated; contains 16% carbohydrates.

The protein localises to the secreted. It catalyses the reaction 4 hydroquinone + O2 = 4 benzosemiquinone + 2 H2O. Inhibited by sodium azide. In terms of biological role, lignin degradation and detoxification of lignin-derived products. Oxidation of a broad range of substrates including mono-, di- and polyphenols, aromatic amines and methoxy-substituted phenols accompanied by reduction of oxygen to water. The protein is Laccase-C1 of Cerrena unicolor (Canker rot fungus).